A 366-amino-acid chain; its full sequence is Carbamoyl phosphate synthase small chain (366 aa).

Residues 1–168 (MYGILVLEDG…KETVIYNAED (168 aa)) form a CPSase region. L-glutamine-binding residues include Ser-45, Gly-220, and Gly-222. A Glutamine amidotransferase type-1 domain is found at 172–363 (RCVLIDCGVK…VELGIKFKAE (192 aa)). Cys-247 (nucleophile) is an active-site residue. L-glutamine contacts are provided by Leu-248, Gln-251, Asn-289, Gly-291, and Phe-292. Residues His-336 and Glu-338 contribute to the active site.

This sequence belongs to the CarA family. In terms of assembly, composed of two chains; the small (or glutamine) chain promotes the hydrolysis of glutamine to ammonia, which is used by the large (or ammonia) chain to synthesize carbamoyl phosphate. Tetramer of heterodimers (alpha,beta)4.

It carries out the reaction hydrogencarbonate + L-glutamine + 2 ATP + H2O = carbamoyl phosphate + L-glutamate + 2 ADP + phosphate + 2 H(+). The catalysed reaction is L-glutamine + H2O = L-glutamate + NH4(+). It functions in the pathway amino-acid biosynthesis; L-arginine biosynthesis; carbamoyl phosphate from bicarbonate: step 1/1. It participates in pyrimidine metabolism; UMP biosynthesis via de novo pathway; (S)-dihydroorotate from bicarbonate: step 1/3. Small subunit of the glutamine-dependent carbamoyl phosphate synthetase (CPSase). CPSase catalyzes the formation of carbamoyl phosphate from the ammonia moiety of glutamine, carbonate, and phosphate donated by ATP, constituting the first step of 2 biosynthetic pathways, one leading to arginine and/or urea and the other to pyrimidine nucleotides. The small subunit (glutamine amidotransferase) binds and cleaves glutamine to supply the large subunit with the substrate ammonia. The polypeptide is Carbamoyl phosphate synthase small chain (Methanococcus maripaludis (strain C5 / ATCC BAA-1333)).